The chain runs to 74 residues: Translation initiation factor IF-1 (74 aa).

The S1-like domain maps to 1–72 (MAKQDAIEME…TKGRITYRLR (72 aa)).

The protein belongs to the IF-1 family. As to quaternary structure, component of the 30S ribosomal translation pre-initiation complex which assembles on the 30S ribosome in the order IF-2 and IF-3, IF-1 and N-formylmethionyl-tRNA(fMet); mRNA recruitment can occur at any time during PIC assembly.

The protein resides in the cytoplasm. Functionally, one of the essential components for the initiation of protein synthesis. Stabilizes the binding of IF-2 and IF-3 on the 30S subunit to which N-formylmethionyl-tRNA(fMet) subsequently binds. Helps modulate mRNA selection, yielding the 30S pre-initiation complex (PIC). Upon addition of the 50S ribosomal subunit IF-1, IF-2 and IF-3 are released leaving the mature 70S translation initiation complex. The polypeptide is Translation initiation factor IF-1 (Acaryochloris marina (strain MBIC 11017)).